Here is a 247-residue protein sequence, read N- to C-terminus: Submandibular gland secretory Glx-rich protein CB (247 aa).

Residues M1 to G18 form the signal peptide. Residues S14–K219 are disordered. Composition is skewed to low complexity over residues P39 to D50, E58 to A71, Q81 to P93, Q104 to P116, Q126 to P139, Q150 to Q159, and V178 to N196. A run of 5 repeats spans residues E67–N89, Q90–N112, Q113–N135, Q136–N158, and Q159–P181. The segment at E67–P181 is 5 X 23 AA tandem repeats. Positions P197–H212 are enriched in basic and acidic residues.

In terms of tissue distribution, submandibular gland acinar cells.

It localises to the secreted. Functionally, GRP proteins have a marked affinity for hydroxyapatite. They may play a role in the formation of the protective acquired pellicle at the saliva-tooth interface. In Rattus norvegicus (Rat), this protein is Submandibular gland secretory Glx-rich protein CB (Grpcb).